We begin with the raw amino-acid sequence, 377 residues long: SH2/SH3 adapter protein NCK1 (377 aa).

Ala-2 bears the N-acetylalanine mark. The SH3 1 domain maps to 2-61 (AEEVVVVAKFDYVAQQEQELDIKKNERLWLLDDSKSWWRVRNSMNKTGFVPSNYVERKNS). Phosphoserine is present on residues Ser-85, Ser-89, Ser-91, and Ser-96. Tyr-105 carries the post-translational modification Phosphotyrosine. One can recognise an SH3 2 domain in the interval 106–165 (DLNMPAYVKFNYMAEREDELSLIKGTKVIVMEKCSDGWWRGSYNGQVGWFPSNYVTEEGD). Residue Ser-166 is modified to Phosphoserine. Residues 190–252 (QVLHVVQALY…PKNYVTVMQN (63 aa)) form the SH3 3 domain. In terms of domain architecture, SH2 spans 282 to 376 (WYYGKVTRHQ…GEKLYLVKHL (95 aa)).

Interacts (via SH2 domain and SH3 domain 2) with EGFR. Interacts with PAK1 and SOS1. Interacts (via SH3 domains) with PKN2. Associates with BLNK, PLCG1, VAV1 and NCK1 in a B-cell antigen receptor-dependent fashion. Interacts with SOCS7. This interaction is required for nuclear import. Part of a complex containing PPP1R15B, PP1 and NCK1. Interacts with RALGPS1. Interacts with CAV2 (tyrosine phosphorylated form). Interacts with ADAM15. Interacts with FASLG. Directly interacts with RASA1. Interacts with isoform 4 of MINK1. Interacts with FLT1 (tyrosine phosphorylated). Interacts with KDR (tyrosine phosphorylated). Interacts (via SH2 domain) with EPHB1; activates the JUN cascade to regulate cell adhesion. Interacts with EPHA2. Interacts (via SH2 domain) with PDGFRB (tyrosine phosphorylated). Interacts with the inactive form of EIF2AK2/PKR. Interacts with PTPN1. Interacts with INSR/insulin receptor (in response to insulin stimulation); This interaction may mediate PTPN1 recruitment leading to INSR dephosphorylation. Interacts with IRS1. Phosphorylated on Ser and Tyr residues. Phosphorylated in response to activation of EGFR and FcERI. Phosphorylated by activated PDGFRB.

Its subcellular location is the cytoplasm. It is found in the endoplasmic reticulum. The protein localises to the nucleus. Its function is as follows. Adapter protein which associates with tyrosine-phosphorylated growth factor receptors, such as KDR and PDGFRB, or their cellular substrates. Maintains low levels of EIF2S1 phosphorylation by promoting its dephosphorylation by PP1. Plays a role in the DNA damage response, not in the detection of the damage by ATM/ATR, but for efficient activation of downstream effectors, such as that of CHEK2. Plays a role in ELK1-dependent transcriptional activation in response to activated Ras signaling. Modulates the activation of EIF2AK2/PKR by dsRNA. May play a role in cell adhesion and migration through interaction with ephrin receptors. This chain is SH2/SH3 adapter protein NCK1 (NCK1), found in Homo sapiens (Human).